A 154-amino-acid chain; its full sequence is Myoglobin (154 aa).

Residues 2–148 enclose the Globin domain; it reads GLSDGEWQLV…FRNDMAAQYK (147 aa). At S4 the chain carries Phosphoserine. Residue H65 participates in nitrite binding. H65 provides a ligand contact to O2. A Phosphothreonine modification is found at T68. Heme b is bound at residue H94.

In terms of assembly, monomer.

It is found in the cytoplasm. The protein resides in the sarcoplasm. The catalysed reaction is Fe(III)-heme b-[protein] + nitric oxide + H2O = Fe(II)-heme b-[protein] + nitrite + 2 H(+). The enzyme catalyses H2O2 + AH2 = A + 2 H2O. Functionally, monomeric heme protein which primary function is to store oxygen and facilitate its diffusion within muscle tissues. Reversibly binds oxygen through a pentacoordinated heme iron and enables its timely and efficient release as needed during periods of heightened demand. Depending on the oxidative conditions of tissues and cells, and in addition to its ability to bind oxygen, it also has a nitrite reductase activity whereby it regulates the production of bioactive nitric oxide. Under stress conditions, like hypoxia and anoxia, it also protects cells against reactive oxygen species thanks to its pseudoperoxidase activity. This chain is Myoglobin, found in Rangifer tarandus (Reindeer).